The following is a 291-amino-acid chain: 3-methyl-2-oxobutanoate hydroxymethyltransferase (291 aa).

Over residues 1-10 the composition is skewed to polar residues; that stretch reads MTQLSAAQTP. The disordered stretch occupies residues 1–20; sequence MTQLSAAQTPQPKPADGNRA. Residues aspartate 71 and aspartate 110 each coordinate Mg(2+). 3-methyl-2-oxobutanoate is bound by residues 71 to 72, aspartate 110, and lysine 140; that span reads DS. Glutamate 142 contributes to the Mg(2+) binding site. Glutamate 208 functions as the Proton acceptor in the catalytic mechanism.

Belongs to the PanB family. Homodecamer; pentamer of dimers. It depends on Mg(2+) as a cofactor.

The protein resides in the cytoplasm. The enzyme catalyses 3-methyl-2-oxobutanoate + (6R)-5,10-methylene-5,6,7,8-tetrahydrofolate + H2O = 2-dehydropantoate + (6S)-5,6,7,8-tetrahydrofolate. It participates in cofactor biosynthesis; (R)-pantothenate biosynthesis; (R)-pantoate from 3-methyl-2-oxobutanoate: step 1/2. Catalyzes the reversible reaction in which hydroxymethyl group from 5,10-methylenetetrahydrofolate is transferred onto alpha-ketoisovalerate to form ketopantoate. This chain is 3-methyl-2-oxobutanoate hydroxymethyltransferase, found in Streptomyces coelicolor (strain ATCC BAA-471 / A3(2) / M145).